The chain runs to 358 residues: sn-glycerol-3-phosphate import ATP-binding protein UgpC (358 aa).

Residues 4–235 (VELKQVRKTY…PATLFVASFI (232 aa)) enclose the ABC transporter domain. Residue 37–44 (GPSGCGKS) coordinates ATP.

This sequence belongs to the ABC transporter superfamily. sn-glycerol-3-phosphate importer (TC 3.A.1.1.3) family. In terms of assembly, the complex is composed of two ATP-binding proteins (UgpC), two transmembrane proteins (UgpA and UgpE) and a solute-binding protein (UgpB).

Its subcellular location is the cell inner membrane. It carries out the reaction sn-glycerol 3-phosphate(out) + ATP + H2O = sn-glycerol 3-phosphate(in) + ADP + phosphate + H(+). Its function is as follows. Part of the ABC transporter complex UgpBAEC involved in sn-glycerol-3-phosphate (G3P) import. Responsible for energy coupling to the transport system. This is sn-glycerol-3-phosphate import ATP-binding protein UgpC from Roseobacter denitrificans (strain ATCC 33942 / OCh 114) (Erythrobacter sp. (strain OCh 114)).